We begin with the raw amino-acid sequence, 999 residues long: Translation initiation factor IF-2 (999 aa).

Residues 50–407 (AFVNNTGSPA…RGQGQTVRLS (358 aa)) are disordered. Composition is skewed to pro residues over residues 60-89 (PAAP…PPGG) and 96-121 (PMPP…PPQS). The span at 136-162 (VAAAEARAAALKAEQEAAVKAAQAARQ) shows a compositional bias: low complexity. Basic and acidic residues predominate over residues 163–173 (QQRDNVRREPP). Pro residues predominate over residues 179 to 194 (RPGPRPGPGAMPPRPG). The span at 213 to 222 (GGRPPARGAG) shows a compositional bias: low complexity. Pro residues predominate over residues 244 to 266 (RPSPASMPPRPSPASMPPRPSPA). A compositionally biased stretch (gly residues) spans 275–367 (RPGGPGSGRP…GAAGAFGRPG (93 aa)). Positions 371–380 (TRGRKSKKQR) are enriched in basic residues. A compositionally biased stretch (polar residues) spans 388 to 405 (SAPTMSSGAPRGQGQTVR). Residues 490–662 (SRPPVVTVMG…VLLTADASLE (173 aa)) form the tr-type G domain. The segment at 499–506 (GHVDHGKT) is G1. 499–506 (GHVDHGKT) serves as a coordination point for GTP. The G2 stretch occupies residues 524–528 (GITQH). The tract at residues 549 to 552 (DTPG) is G3. GTP-binding positions include 549–553 (DTPGH) and 603–606 (NKID). Residues 603–606 (NKID) are G4. Positions 639–641 (AAK) are G5.

This sequence belongs to the TRAFAC class translation factor GTPase superfamily. Classic translation factor GTPase family. IF-2 subfamily.

The protein resides in the cytoplasm. Its function is as follows. One of the essential components for the initiation of protein synthesis. Protects formylmethionyl-tRNA from spontaneous hydrolysis and promotes its binding to the 30S ribosomal subunits. Also involved in the hydrolysis of GTP during the formation of the 70S ribosomal complex. The protein is Translation initiation factor IF-2 of Salinispora tropica (strain ATCC BAA-916 / DSM 44818 / JCM 13857 / NBRC 105044 / CNB-440).